Reading from the N-terminus, the 152-residue chain is NADH-ubiquinone oxidoreductase chain 4 (152 aa).

4 helical membrane-spanning segments follow: residues 2–22 (FSGATTLMIAHGLTSSMYFCL), 43–63 (ILLPLTAFWWLTASLTNLALP), 84–104 (ITIVLTGLNMLITALYSLHMF), and 128–148 (MLMFMHLAPIILLSLNPNIIL).

This sequence belongs to the complex I subunit 4 family.

It localises to the mitochondrion membrane. The enzyme catalyses a ubiquinone + NADH + 5 H(+)(in) = a ubiquinol + NAD(+) + 4 H(+)(out). In terms of biological role, core subunit of the mitochondrial membrane respiratory chain NADH dehydrogenase (Complex I) that is believed to belong to the minimal assembly required for catalysis. Complex I functions in the transfer of electrons from NADH to the respiratory chain. The immediate electron acceptor for the enzyme is believed to be ubiquinone. This Macaca fascicularis (Crab-eating macaque) protein is NADH-ubiquinone oxidoreductase chain 4 (MT-ND4).